The sequence spans 32 residues: MSDIN-like toxin proprotein 2 (32 aa).

A propeptide spanning residues 1 to 10 (MSDINATRVP) is cleaved from the precursor. The cyclopeptide (Ala-Pro) cross-link spans 11-17 (AWLAECP). Residues 18-32 (CVGDDISHLLTRGEK) constitute a propeptide that is removed on maturation.

The protein belongs to the MSDIN fungal toxin family. Processed by the macrocyclase-peptidase enzyme POPB to yield a toxic cyclic heptapeptide. POPB first removes 10 residues from the N-terminus. Conformational trapping of the remaining peptide forces the enzyme to release this intermediate rather than proceed to macrocyclization. The enzyme rebinds the remaining peptide in a different conformation and catalyzes macrocyclization of the N-terminal 7 residues.

Probable toxin that belongs to the MSDIN-like toxin family responsible for a large number of food poisoning cases and deaths. The protein is MSDIN-like toxin proprotein 2 of Amanita rimosa.